Here is a 109-residue protein sequence, read N- to C-terminus: METKPNALTGTSLSSTSGQTTQKSITLQNSENKYIPQNSSETFGLMAILNLALLLWTLLATLRVTLQKNWPTETTKTTTITQFTTLQKNTPSAKNGLKNTTNKHSHEDM.

Residues 1–25 (METKPNALTGTSLSSTSGQTTQKSI) are disordered. Low complexity predominate over residues 8–22 (LTGTSLSSTSGQTTQ). The chain crosses the membrane as a helical span at residues 42 to 62 (TFGLMAILNLALLLWTLLATL). Residues 84–109 (TTLQKNTPSAKNGLKNTTNKHSHEDM) are disordered. Over residues 91–102 (PSAKNGLKNTTN) the composition is skewed to polar residues.

The protein resides in the host membrane. This is an uncharacterized protein from Bdellovibrio phage phiMH2K (Bacteriophage phiMH2K).